Reading from the N-terminus, the 301-residue chain is Acetyl-coenzyme A carboxylase carboxyl transferase subunit beta (301 aa).

Positions 23–292 (VWTKCDSCGQ…PSPDEPRESV (270 aa)) constitute a CoA carboxyltransferase N-terminal domain. The Zn(2+) site is built by Cys27, Cys30, Cys46, and Cys49. The C4-type zinc finger occupies 27-49 (CDSCGQVLYRAELERNLEVCPKC). The interval 280–301 (LPAPSPDEPRESVVVPDQEPEA) is disordered.

Belongs to the AccD/PCCB family. In terms of assembly, acetyl-CoA carboxylase is a heterohexamer composed of biotin carboxyl carrier protein (AccB), biotin carboxylase (AccC) and two subunits each of ACCase subunit alpha (AccA) and ACCase subunit beta (AccD). The cofactor is Zn(2+).

It is found in the cytoplasm. The enzyme catalyses N(6)-carboxybiotinyl-L-lysyl-[protein] + acetyl-CoA = N(6)-biotinyl-L-lysyl-[protein] + malonyl-CoA. The protein operates within lipid metabolism; malonyl-CoA biosynthesis; malonyl-CoA from acetyl-CoA: step 1/1. In terms of biological role, component of the acetyl coenzyme A carboxylase (ACC) complex. Biotin carboxylase (BC) catalyzes the carboxylation of biotin on its carrier protein (BCCP) and then the CO(2) group is transferred by the transcarboxylase to acetyl-CoA to form malonyl-CoA. This chain is Acetyl-coenzyme A carboxylase carboxyl transferase subunit beta, found in Enterobacter sp. (strain 638).